The following is a 617-amino-acid chain: Protein fem-1 homolog C (617 aa).

At M1 the chain carries N-acetylmethionine. ANK repeat units lie at residues D2 to V31, N40 to V70, E82 to N111, T115 to V144, H148 to R177, K181 to K210, and Y213 to T242. 2 TPR repeats span residues I245–D279 and S338–N371. ANK repeat units lie at residues N481 to V523 and D527 to A556.

This sequence belongs to the fem-1 family. As to quaternary structure, component of a Cul2-RING (CRL2) E3 ubiquitin-protein ligase complex, also named ECS (Elongin BC-CUL2/5-SOCS-box protein) complex, composed of CUL2, Elongin BC (ELOB and ELOC), RBX1 and substrate-specific adapter FEM1C. Widely expressed. Expressed at higher level in testis.

It participates in protein modification; protein ubiquitination. Substrate-recognition component of a Cul2-RING (CRL2) E3 ubiquitin-protein ligase complex of the DesCEND (destruction via C-end degrons) pathway, which recognizes a C-degron located at the extreme C terminus of target proteins, leading to their ubiquitination and degradation. The C-degron recognized by the DesCEND pathway is usually a motif of less than ten residues and can be present in full-length proteins, truncated proteins or proteolytically cleaved forms. The CRL2(FEM1C) complex specifically recognizes proteins with an arginine at the C-terminus: recognizes and binds proteins ending with -Lys/Arg-Xaa-Arg and -Lys/Arg-Xaa-Xaa-Arg C-degrons, such as SIL1 or OR51B2, leading to their ubiquitination and degradation. The CRL2(FEM1C) complex mediates ubiquitination and degradation of truncated MSRB1/SEPX1 selenoproteins produced by failed UGA/Sec decoding. Promotes ubiquitination and degradation of SLBP. The sequence is that of Protein fem-1 homolog C from Mus musculus (Mouse).